Reading from the N-terminus, the 334-residue chain is MNLYLIFLIVVGVVGLVLVGLFLSFFSVWLRALLAGAPVSPFNLVAMRLRQVPYSVMVDARIRATKAGIKLSIDEIEAQYLAGGNVIACVHALIAAQKARIALDWQRACAIDLATKGSGKSVEEAVRTSVDPKVIDCPNPESGRTTIDGVAKDGIQVKVKARVTVRTNLDRFVGGAKEETIIARVGEGIVSTIGSAESYKVVLESPDAISKTVLHRGLDVGSAFEILSIDIADVDVGENVGAKLQEAQAQANKSIAQAQAEIRRAAAVALEQEMVARVQEMQAKVVEAQSQVPLAMAEAFRSGRLGVMDYFRMENIQGDTAMRNSLARPEDKKQ.

Residues 3–23 (LYLIFLIVVGVVGLVLVGLFL) form a helical membrane-spanning segment.

This sequence belongs to the flotillin-like FloA family. Homooligomerizes.

It is found in the cell membrane. The protein localises to the membrane raft. Its function is as follows. Found in functional membrane microdomains (FMM) that may be equivalent to eukaryotic membrane rafts. FMMs are highly dynamic and increase in number as cells age. Flotillins are thought to be important factors in membrane fluidity. The polypeptide is Flotillin-like protein FloA (Opitutus terrae (strain DSM 11246 / JCM 15787 / PB90-1)).